The primary structure comprises 468 residues: N-acetyltransferase SLI1 (468 aa).

The protein resides in the endoplasmic reticulum. Functionally, confers resistance to the sphingolipid biosynthesis inhibitor drug myriocin (ISP-1). Inactivates ISP-1 by converting it into N-acetyl-myriocin. Cooperates with YPK1 in mediating resistance to myriocin. In Saccharomyces cerevisiae (strain ATCC 204508 / S288c) (Baker's yeast), this protein is N-acetyltransferase SLI1 (SLI1).